The chain runs to 390 residues: Tryptophan synthase beta chain (390 aa).

K90 bears the N6-(pyridoxal phosphate)lysine mark.

The protein belongs to the TrpB family. Tetramer of two alpha and two beta chains. Requires pyridoxal 5'-phosphate as cofactor.

It carries out the reaction (1S,2R)-1-C-(indol-3-yl)glycerol 3-phosphate + L-serine = D-glyceraldehyde 3-phosphate + L-tryptophan + H2O. It participates in amino-acid biosynthesis; L-tryptophan biosynthesis; L-tryptophan from chorismate: step 5/5. Its function is as follows. The beta subunit is responsible for the synthesis of L-tryptophan from indole and L-serine. The protein is Tryptophan synthase beta chain of Bacteroides fragilis (strain ATCC 25285 / DSM 2151 / CCUG 4856 / JCM 11019 / LMG 10263 / NCTC 9343 / Onslow / VPI 2553 / EN-2).